A 427-amino-acid polypeptide reads, in one-letter code: MAATDVQRASNEEKRSLAMSGHVGFDSLPDQLVSKSVTQGFCFNILCVGETGIGKSTLMNTLFNTTFETEEASHYENGVCLRPRTYDLQESNVHLKLTIVDTVGFGDQINKDDSYRSVVDYIDTQFENYLQEELKIRRSLFNFHDSRIHVCLYFITPTGHSLKSLDLVTMKKLDSKVNIIPIIAKADTISKSELHKFKIKIMSELVSNGVQIYQFPTDDDAVAEINSVMNAHLPFAVVGSTEEVKVGNKLVRARQYPWGVVQVENESHCDFVKLREMLIRVNMEDLREQTHTRHYELYRRCKLEEMGFKDNDPDTQPFSLQETYEAKRKEFLSELQRKEEEMRQMFVNKVKETEAELKERERELQEKFMQLKRIHQEESKKVEDKRRDLEEEMNSFNRRKAAMEALQSQSFQATSQQPLKKDKDRKN.

The Septin-type G domain maps to 39 to 305 (QGFCFNILCV…ELYRRCKLEE (267 aa)). Residues 49-56 (GETGIGKS) form a G1 motif region. GTP-binding positions include 49–56 (GETGIGKS), G104, 185–193 (KADTISKSE), G239, and R254. The G3 motif stretch occupies residues 101–104 (DTVG). The interval 184–187 (AKAD) is G4 motif. Positions 320 to 409 (LQETYEAKRK…KAAMEALQSQ (90 aa)) form a coiled coil. Over residues 376–389 (QEESKKVEDKRRDL) the composition is skewed to basic and acidic residues. Residues 376–427 (QEESKKVEDKRRDLEEEMNSFNRRKAAMEALQSQSFQATSQQPLKKDKDRKN) are disordered. A compositionally biased stretch (polar residues) spans 406–418 (LQSQSFQATSQQP).

The protein belongs to the TRAFAC class TrmE-Era-EngA-EngB-Septin-like GTPase superfamily. Septin GTPase family.

This is Septin-8-A (sept8-a) from Xenopus laevis (African clawed frog).